A 127-amino-acid chain; its full sequence is Large ribosomal subunit protein bL17 (127 aa).

Belongs to the bacterial ribosomal protein bL17 family. Part of the 50S ribosomal subunit. Contacts protein L32.

This Stenotrophomonas maltophilia (strain R551-3) protein is Large ribosomal subunit protein bL17.